The sequence spans 259 residues: Bisphosphoglycerate mutase (259 aa).

Residue serine 2 is modified to N-acetylserine. Substrate contacts are provided by residues 10–17, 23–24, arginine 62, 89–92, arginine 100, and 116–117; these read RHGEGAWN, CS, ERHY, and RR. The active-site Tele-phosphohistidine intermediate is the histidine 11. Residue glutamate 89 is the Proton donor/acceptor of the active site. The residue at position 122 (threonine 122) is a Phosphothreonine. 189-190 provides a ligand contact to substrate; the sequence is GN.

The protein belongs to the phosphoglycerate mutase family. BPG-dependent PGAM subfamily. As to quaternary structure, homodimer. Expressed in red blood cells.

The catalysed reaction is (2R)-3-phospho-glyceroyl phosphate = (2R)-2,3-bisphosphoglycerate + H(+). It carries out the reaction (2R)-2-phosphoglycerate = (2R)-3-phosphoglycerate. Its activity is regulated as follows. At alkaline pH BPGM favors the synthase reaction; however, at lower pH the phosphatase reaction is dominant. Inhibited by citrate. In terms of biological role, plays a major role in regulating hemoglobin oxygen affinity by controlling the levels of its allosteric effector 2,3-bisphosphoglycerate (2,3-BPG). Also exhibits mutase (EC 5.4.2.11) activity. This Oryctolagus cuniculus (Rabbit) protein is Bisphosphoglycerate mutase (BPGM).